The sequence spans 1783 residues: MFSFFKQIFKSLKKFFFLLFGIIFVLFSIIFLETSIVQLSNNLVSTYTTLVSKTNSSDIVAPAILKEANPVYIASLTNDSGYFSKIKIDDKKINYLFPYQENDFGSDSGQSNGSGDNQNKTIPRKGDVNEKDKLFLARKRGILKAYGEANIAEKRIYKGLAVSFNNTDSFNGSDISDSITNRHIISDPQNLIYDASGNLLGYFADGLIKETISLRAGIARFPGDKGKSTGTQVKITQKQQTNNDPQKDSTVNSLYKTNNKDKVWFKSDETKADNTDISANYLFTGGNEAANWFPNLYANIPIDLEIDPGSQFWKDVNPFKEIVEEFQTQKESKDNQSFTLTFNLDISKLNKLDNEQLKWLETNAKTIANNSSFGDWDLENKLKQLKKFELKINKDWLKKKVESEKDTILNSLPGFSDSDKDTIFKTQNGMMVRNNNLSFQPSSNNLQLVQNQNSQASNGIADPNFSNVQTAYNKIHQSNNTPEKTLDAVYAAVLDQWRSIFQEDLVKKTVDLLEKYRDHFLKATAFNNIDYSKQNIAIANNVSSAESASFLVSNKDEQRYNDLSLIDGVDLKSWLFKPEQNESNPLDTIYGGQDANNGFLQKIDYEFKPSTSSGGMTASLKNTQALSPKSTKFPIYPKLANIIAQAQLPEATNIPTTALDALKQWTNLDANGFNNLKEEDKRKAANNYLALLSYFTPAFQDPNELIETNRQMLEIPITVKNGVNPLILPTDQQNLVVQTPEAHGAVVSQQWLFRHNKEILPQEGEYAWKTALQTPNNFPNWLNDLPDRYKFSINGLTFAILGIGESVETGYPVLSLQSPLPNTQDEALIFVNDQAYRSILFAVPAANQENYYAFKSTDLKQHTDQDPVQFIANRLEGYLDVPRSDLAFNVKDISKFNYLTTARNYFPDLVQSYLAIVSTVIAIFLIILALYLIILLIKSFIKKNQTEFSIIRAGGFSTTKFIVGMSVFAGIVAIVSSFLGVLFAFLLEGQVKGIINRYWFIALPENSFNWLSFFGSFFITFFVFEFISWIAFKQLFSKPVNVLIDQGNETKFSVLLHLLKHKSHTMSPLTKFRVSLIVSRFSRLFTYVGLSSVALLLIGIAGTIPQKFSAAQTSTSLNRNFNYKLNLQTPTEQSGWYAIQPYSHFGVTDNNNGIKTLYNESVQANSQNEHPYKPSNLKLKNRQDQPIKAADGTELELGNLLLPSYGGAQQLNTDENFFRHASLSKWIIDFPIRVGGSNINPWEIVEKSIPKQITQLLSASSDQFLISVLTDDFFNNLNANGFLIRNPRTNQIQLDASRVLTTIDVFNPGGVKFNDSFLSFMLKVYGDFELAKQDSKLNFGIVPVDPAIEETYTYVEGPFGFQEDNLDENSPYTLTGINPESSFVNLIDGSGNSLRNLISSDQEMNVIVNAGFQYANNINIGDYVYIKPKNTATRYSEKFLKAPLNNSTVAFKVVGVSTDAFGQELYINQHIANNLLKLSGNQGRGIIRDVIKKTNGQSQSSDEYEIDYVKPNGYVPFNGVFSKELKPSLLNKALVLNSIIGVWGNFTDFGNNFQNLVRNKLDKVITSILPTDPEIINKLAQEKQIINTTSMNYESLRKELVNKYKTEWNSVNLLSQNASSIFGNNIIAPVLNIDAAGTSAQIIRNNAEVLFNTVNQVDAFLLGTIIPFIFITCVVLGISMLEEMKRIFISLKAIGYRDVQNLISLLTFFIPAFVLALLISIGVLAGVLIGIQAVVFNVAQVFLTNVFEFLPYMVGIVLFGVTIFVIGSYFWIKLRSAELKEGF.

The helical transmembrane segment at 16 to 36 threads the bilayer; that stretch reads FFLLFGIIFVLFSIIFLETSI. The span at 105–119 shows a compositional bias: low complexity; sequence GSDSGQSNGSGDNQN. The segment at 105–125 is disordered; sequence GSDSGQSNGSGDNQNKTIPRK. A run of 8 helical transmembrane segments spans residues 917-937, 967-987, 1010-1030, 1084-1104, 1660-1680, 1709-1729, 1730-1750, and 1752-1772; these read VSTVIAIFLIILALYLIILLI, VFAGIVAIVSSFLGVLFAFLL, WLSFFGSFFITFFVFEFISWI, LFTYVGLSSVALLLIGIAGTI, FLLGTIIPFIFITCVVLGISM, FIPAFVLALLISIGVLAGVLI, GIQAVVFNVAQVFLTNVFEFL, and YMVGIVLFGVTIFVIGSYFWI.

It belongs to the ABC-4 integral membrane protein family.

The protein localises to the cell membrane. This is an uncharacterized protein from Mycoplasma genitalium (strain ATCC 33530 / DSM 19775 / NCTC 10195 / G37) (Mycoplasmoides genitalium).